The sequence spans 276 residues: Phosducin-like protein 1 (276 aa).

Phosphoserine is present on residues S18, S19, S20, and S42. Positions 18–74 are disordered; it reads SSSEGEDNGDEGGDNKGASGKSRCSGLTIDTNPDATPAGGFRQQSSTNTGPKGVVKD. The region spanning 62 to 272 is the Phosducin domain; the sequence is SSTNTGPKGV…LIEHGIIVDR (211 aa). The thioredoxin fold stretch occupies residues 153–276; the sequence is FGQVQQLTSH…GIIVDRALYN (124 aa).

This sequence belongs to the phosducin family. In terms of assembly, forms a complex with the beta and gamma subunits of the GTP-binding proteins. Interacts with the CCT chaperonin complex.

Functionally, functions as a co-chaperone for CCT in the assembly of heterotrimeric G protein complexes, facilitates the assembly of both Gbeta-Ggamma and RGS-Gbeta5 heterodimers. In Drosophila melanogaster (Fruit fly), this protein is Phosducin-like protein 1.